The chain runs to 212 residues: 3-isopropylmalate dehydratase small subunit (212 aa).

It belongs to the LeuD family. LeuD type 1 subfamily. Heterodimer of LeuC and LeuD.

The enzyme catalyses (2R,3S)-3-isopropylmalate = (2S)-2-isopropylmalate. Its pathway is amino-acid biosynthesis; L-leucine biosynthesis; L-leucine from 3-methyl-2-oxobutanoate: step 2/4. In terms of biological role, catalyzes the isomerization between 2-isopropylmalate and 3-isopropylmalate, via the formation of 2-isopropylmaleate. This is 3-isopropylmalate dehydratase small subunit from Dechloromonas aromatica (strain RCB).